A 252-amino-acid chain; its full sequence is Thiazole synthase (252 aa).

Lysine 98 acts as the Schiff-base intermediate with DXP in catalysis. 1-deoxy-D-xylulose 5-phosphate contacts are provided by residues glycine 159, 185 to 186 (AG), and 207 to 208 (AT).

It belongs to the ThiG family. In terms of assembly, homotetramer. Forms heterodimers with either ThiH or ThiS.

The protein resides in the cytoplasm. It catalyses the reaction [ThiS sulfur-carrier protein]-C-terminal-Gly-aminoethanethioate + 2-iminoacetate + 1-deoxy-D-xylulose 5-phosphate = [ThiS sulfur-carrier protein]-C-terminal Gly-Gly + 2-[(2R,5Z)-2-carboxy-4-methylthiazol-5(2H)-ylidene]ethyl phosphate + 2 H2O + H(+). It participates in cofactor biosynthesis; thiamine diphosphate biosynthesis. Its function is as follows. Catalyzes the rearrangement of 1-deoxy-D-xylulose 5-phosphate (DXP) to produce the thiazole phosphate moiety of thiamine. Sulfur is provided by the thiocarboxylate moiety of the carrier protein ThiS. In vitro, sulfur can be provided by H(2)S. This is Thiazole synthase from Mycolicibacterium smegmatis (strain ATCC 700084 / mc(2)155) (Mycobacterium smegmatis).